The chain runs to 281 residues: Spermatogenesis-associated serine-rich protein 1 (281 aa).

Over residues 1-14 the composition is skewed to basic and acidic residues; that stretch reads MEAARDAQHSDVLE. The interval 1-92 is disordered; it reads MEAARDAQHS…SSSAQANRSL (92 aa). Polar residues predominate over residues 21–37; that stretch reads SRTSSHQNRRASLSSDG. Thr53 is subject to Phosphothreonine. Polar residues predominate over residues 54–65; the sequence is PSDTASGLGQKT. The segment covering 66–85 has biased composition (low complexity); sequence SSTSSSSSSSSSSSPSSSSS. Ser71, Ser74, Ser77, Ser78, Ser79, and Ser91 each carry phosphoserine.

Detected in pachytene spermatocytes and round spermatids.

This Rattus norvegicus (Rat) protein is Spermatogenesis-associated serine-rich protein 1 (Spats1).